Here is a 411-residue protein sequence, read N- to C-terminus: Serpin A12 (411 aa).

The first 20 residues, 1–20, serve as a signal peptide directing secretion; that stretch reads MNLVLGLGLFLAGLLTVKGL. Asparagine 92 and asparagine 267 each carry an N-linked (GlcNAc...) asparagine glycan. Positions 364–382 are reactive center loop; sequence GTEGAAGSGAQTLPMETPR.

It belongs to the serpin family. In terms of assembly, forms a stable complex with KLK7. Glycosylation slightly decreases affinity for heparin, but otherwise has no significant effect on KLK7 inhibitory activity or thermal stability of the protein. As to expression, expressed in visceral adipose tissues.

The protein resides in the secreted. Its activity is regulated as follows. Inhibition of KLK7 is enhanced by heparin. Functionally, adipokine that modulates insulin action by specifically inhibiting its target protease KLK7 in white adipose tissues. This chain is Serpin A12 (Serpina12), found in Rattus norvegicus (Rat).